The chain runs to 183 residues: uncharacterized protein (183 aa).

It to A.muscaria DOPA 4,5-dioxygenase.

This is an uncharacterized protein from Botryotinia fuckeliana (Noble rot fungus).